The primary structure comprises 724 residues: Probable zinc transporter MSC2 (724 aa).

Over 1–6 (MNLQEL) the chain is Cytoplasmic. A helical membrane pass occupies residues 7–27 (LAKVPLLLSYPTIILSSNLIV). Topologically, residues 28–58 (PSHNDLISRAASTSAAEYADEKLIFFSTDHA) are lumenal. Residues 59–79 (IRLIFLPTFVASSFNLFAHYF) traverse the membrane as a helical segment. Topologically, residues 80 to 90 (NFINYSSRRKY) are cytoplasmic. The helical transmembrane segment at 91 to 111 (YVLFTAIYFLSILTAIFHPIQ) threads the bilayer. Over 112 to 134 (STCITLLIIKLLTTADESSPKIA) the chain is Lumenal. A helical membrane pass occupies residues 135–155 (LNFKTILKTFVPFITLTLVIL). The Cytoplasmic portion of the chain corresponds to 156–174 (RWDPSFDASSGDVNKISTS). Residues 175–195 (LAAYALLILTLRYASPLILST) traverse the membrane as a helical segment. At 196 to 219 (LSSSIGVVSKDTSVAQHSISRNKR) the chain is on the lumenal side. The helical transmembrane segment at 220–240 (FPLILVLPIFSFVLLYLMTIV) threads the bilayer. The Cytoplasmic segment spans residues 241–244 (NKTY). A helical transmembrane segment spans residues 245-265 (NIQLLMVFVFFGCLSIFFLSL). At 266 to 298 (KDLFTEDGNQKKGGQEDEYCRMFDIKYMISYLW) the chain is on the lumenal side. A helical membrane pass occupies residues 299–319 (LTRFTILLTGIMAIVVHFLSF). The Cytoplasmic portion of the chain corresponds to 320–386 (NEITSSIKTD…KQMALNKDTR (67 aa)). Residues 387–407 (SIFSFLLLNTAFMFVQLLYSF) form a helical membrane-spanning segment. The Lumenal segment spans residues 408–417 (RSKSLGLLSD). The helical transmembrane segment at 418-438 (SLHMALDCTSLLLGLIAGVLT) threads the bilayer. At 439 to 453 (KKPASDKFPFGLNYL) the chain is on the cytoplasmic side. A helical membrane pass occupies residues 454-474 (GTLAGFTNGVLLLGIVCGIFV). Topologically, residues 475–491 (EAIERIFNPIHLHATNE) are lumenal. A helical transmembrane segment spans residues 492-512 (LLVVATLGLLVNLVGLFAFDH). Topologically, residues 513–528 (GAHDHGGTDNENMKGI) are cytoplasmic. The chain crosses the membrane as a helical span at residues 529 to 549 (FLHILADTLGSVGVVISTLLI). The Lumenal portion of the chain corresponds to 550 to 563 (KLTHWPIFDPIASL). A helical membrane pass occupies residues 564–584 (LIGSLILLSALPLLKSTSANI). The Cytoplasmic portion of the chain corresponds to 585–724 (LLRLDDKKHN…NSLPLQPIAN (140 aa)). The segment at 614-653 (TPRFWPTESGSSGHSHAHTHSHAENHSHEHHHDQKNGSQE) is disordered. The segment covering 634 to 648 (SHAENHSHEHHHDQK) has biased composition (basic and acidic residues).

The protein belongs to the cation diffusion facilitator (CDF) transporter (TC 2.A.4) family. SLC30A subfamily.

It is found in the endoplasmic reticulum membrane. The protein localises to the nucleus membrane. Its function is as follows. Probably act as a zinc ion transporter moving zinc from the nucleus/endoplasmic reticulum to the cytoplasm. Involved in zinc ion homeostasis and cellular distribution. The chain is Probable zinc transporter MSC2 (MSC2) from Saccharomyces cerevisiae (strain ATCC 204508 / S288c) (Baker's yeast).